A 480-amino-acid polypeptide reads, in one-letter code: Cytochrome b-c1 complex subunit 1, mitochondrial (480 aa).

The transit peptide at 1-34 (MAASVVCRAATAGAQVLLRARRSPALLRTPALRS) directs the protein to the mitochondrion. N6-acetyllysine occurs at positions 111 and 138. K163 carries the N6-acetyllysine; alternate modification. An N6-succinyllysine; alternate modification is found at K163. S212 carries the post-translational modification Phosphoserine. K248 carries the post-translational modification N6-acetyllysine.

Belongs to the peptidase M16 family. UQCRC1/QCR1 subfamily. Component of the ubiquinol-cytochrome c oxidoreductase (cytochrome b-c1 complex, complex III, CIII), a multisubunit enzyme composed of 11 subunits. The complex is composed of 3 respiratory subunits cytochrome b, cytochrome c1 and Rieske protein UQCRFS1, 2 core protein subunits UQCRC1/QCR1 and UQCRC2/QCR2, and 6 low-molecular weight protein subunits UQCRH/QCR6, UQCRB/QCR7, UQCRQ/QCR8, UQCR10/QCR9, UQCR11/QCR10 and subunit 9, the cleavage product of Rieske protein UQCRFS1. The complex exists as an obligatory dimer and forms supercomplexes (SCs) in the inner mitochondrial membrane with NADH-ubiquinone oxidoreductase (complex I, CI) and cytochrome c oxidase (complex IV, CIV), resulting in different assemblies (supercomplex SCI(1)III(2)IV(1) and megacomplex MCI(2)III(2)IV(2)). Interacts with UQCC6. Interacts with STMP1. As to expression, expressed in brain, including substantia nigra, striatum, cortex and cerebellum, and in spinal cord, heart, kidney, liver and muscle.

It is found in the mitochondrion inner membrane. Its function is as follows. Component of the ubiquinol-cytochrome c oxidoreductase, a multisubunit transmembrane complex that is part of the mitochondrial electron transport chain which drives oxidative phosphorylation. The respiratory chain contains 3 multisubunit complexes succinate dehydrogenase (complex II, CII), ubiquinol-cytochrome c oxidoreductase (cytochrome b-c1 complex, complex III, CIII) and cytochrome c oxidase (complex IV, CIV), that cooperate to transfer electrons derived from NADH and succinate to molecular oxygen, creating an electrochemical gradient over the inner membrane that drives transmembrane transport and the ATP synthase. The cytochrome b-c1 complex catalyzes electron transfer from ubiquinol to cytochrome c, linking this redox reaction to translocation of protons across the mitochondrial inner membrane, with protons being carried across the membrane as hydrogens on the quinol. In the process called Q cycle, 2 protons are consumed from the matrix, 4 protons are released into the intermembrane space and 2 electrons are passed to cytochrome c. The 2 core subunits UQCRC1/QCR1 and UQCRC2/QCR2 are homologous to the 2 mitochondrial-processing peptidase (MPP) subunits beta-MPP and alpha-MPP respectively, and they seem to have preserved their MPP processing properties. May be involved in the in situ processing of UQCRFS1 into the mature Rieske protein and its mitochondrial targeting sequence (MTS)/subunit 9 when incorporated into complex III. Seems to play an important role in the maintenance of proper mitochondrial function in nigral dopaminergic neurons. The chain is Cytochrome b-c1 complex subunit 1, mitochondrial (UQCRC1) from Homo sapiens (Human).